The chain runs to 793 residues: Kinesin-like protein KIF3C (793 aa).

The Kinesin motor domain occupies 10 to 365; the sequence is ALKVVARCRP…LRFANRAKNI (356 aa). 97 to 104 contacts ATP; that stretch reads GQTGTGKT. Disordered stretches follow at residues 251–288, 395–423, and 756–793; these read ERQN…ERPK, EKRG…GYPE, and KVRK…ADHE. The span at 270–284 shows a compositional bias: gly residues; it reads GGSGGGGGSGGGAGG. A coiled-coil region spans residues 376–630; sequence KDTLLREFQE…QNEQTRELKL (255 aa). The segment covering 399–413 has biased composition (basic residues); sequence MLGKRPRRKSSRGKK. Residues 631–793 are globular; the sequence is KYLIIENFIP…LRPATVADHE (163 aa).

The protein belongs to the TRAFAC class myosin-kinesin ATPase superfamily. Kinesin family. Kinesin II subfamily. As to quaternary structure, heterodimer of KIF3A and KIF3C.

The protein localises to the cytoplasm. It is found in the cytoskeleton. Functionally, microtubule-based anterograde translocator for membranous organelles. This is Kinesin-like protein KIF3C (KIF3C) from Pongo abelii (Sumatran orangutan).